The chain runs to 254 residues: 3-deoxy-manno-octulosonate cytidylyltransferase (254 aa).

The protein belongs to the KdsB family.

It localises to the cytoplasm. It catalyses the reaction 3-deoxy-alpha-D-manno-oct-2-ulosonate + CTP = CMP-3-deoxy-beta-D-manno-octulosonate + diphosphate. Its pathway is nucleotide-sugar biosynthesis; CMP-3-deoxy-D-manno-octulosonate biosynthesis; CMP-3-deoxy-D-manno-octulosonate from 3-deoxy-D-manno-octulosonate and CTP: step 1/1. It participates in bacterial outer membrane biogenesis; lipopolysaccharide biosynthesis. In terms of biological role, activates KDO (a required 8-carbon sugar) for incorporation into bacterial lipopolysaccharide in Gram-negative bacteria. This chain is 3-deoxy-manno-octulosonate cytidylyltransferase, found in Haemophilus influenzae (strain PittGG).